Reading from the N-terminus, the 1105-residue chain is Serine/threonine-protein kinase 4 homolog B (1105 aa).

Positions 23–274 constitute a Protein kinase domain; that stretch reads FDLIECLGRG…AKDLLKHSFF (252 aa). ATP-binding positions include 29 to 37 and Lys-52; that span reads LGRGSFGSV. Catalysis depends on Asp-142, which acts as the Proton acceptor. Disordered regions lie at residues 348–396, 411–482, and 495–541; these read STQI…TKNN, SSSA…RQPA, and PSFG…SLPL. 2 stretches are compositionally biased toward low complexity: residues 358-396 and 411-437; these read QAQQQQQQAQQQQQQQQQQQQQYQPPSPNNNNRTTTKNN and SSSASASTSPSPSSISSNGNKSGTTTN. The span at 438–458 shows a compositional bias: polar residues; it reads DYHTGNGRTSSSSPQFGLQHQ. Low complexity-rich tracts occupy residues 459–473 and 513–541; these read NSSNSFPSSPNTVPS and PIGSPITKRPTPTMQSSTTTTTSSSSLPL. Positions 516-1105 are calpain-like cysteine protease-like; sequence SPITKRPTPT…SEFDLDFYNN (590 aa). Domain III stretches follow at residues 641–668, 791–830, 836–972, and 1076–1103; these read EVSAKITMEPGYYVIIPATFEPNQEGSF, VHTQQQMPPGCYIIVPCTYDSRQEGSFTLTCYSDCQQGSI, SEQI…NVIQ, and VVIPSTFEPNIQDSFNLTIYSEFDLDFY.

The protein in the N-terminal section; belongs to the protein kinase superfamily. STE Ser/Thr protein kinase family. STE20 subfamily. In the C-terminal section; belongs to the peptidase C2 family. It depends on Mn(2+) as a cofactor.

It catalyses the reaction L-seryl-[protein] + ATP = O-phospho-L-seryl-[protein] + ADP + H(+). The catalysed reaction is L-threonyl-[protein] + ATP = O-phospho-L-threonyl-[protein] + ADP + H(+). Its function is as follows. Probable serine/threonine-protein kinase. This is Serine/threonine-protein kinase 4 homolog B (krsB) from Dictyostelium discoideum (Social amoeba).